The sequence spans 224 residues: Ribose-5-phosphate isomerase A 1 (224 aa).

Residues 29-32 (SGST), 85-88 (DGAD), and 98-101 (KGGG) contribute to the substrate site. Glu-107 functions as the Proton acceptor in the catalytic mechanism. Substrate is bound at residue Lys-125.

The protein belongs to the ribose 5-phosphate isomerase family. As to quaternary structure, homodimer.

The enzyme catalyses aldehydo-D-ribose 5-phosphate = D-ribulose 5-phosphate. It functions in the pathway carbohydrate degradation; pentose phosphate pathway; D-ribose 5-phosphate from D-ribulose 5-phosphate (non-oxidative stage): step 1/1. In terms of biological role, catalyzes the reversible conversion of ribose-5-phosphate to ribulose 5-phosphate. In Oceanobacillus iheyensis (strain DSM 14371 / CIP 107618 / JCM 11309 / KCTC 3954 / HTE831), this protein is Ribose-5-phosphate isomerase A 1.